Consider the following 261-residue polypeptide: Cytochrome c oxidase subunit 3 (261 aa).

The Mitochondrial matrix segment spans residues 1-15 (MTHQTHAYHMVNPSP). A helical membrane pass occupies residues 16–34 (WPLTGALSALLMTSGLIMW). The Mitochondrial intermembrane portion of the chain corresponds to 35-40 (FHFNST). A helical membrane pass occupies residues 41-66 (ILLMLGLTTNMLTMYQWWRDVIREST). Over 67-72 (FQGHHT) the chain is Mitochondrial matrix. A helical membrane pass occupies residues 73 to 105 (PNVQKGLRYGMILFIISEVLFFTGFFWAFYHSS). At 106–128 (LAPTPELGGCWPPTGIHPLNPLE) the chain is on the mitochondrial intermembrane side. A helical transmembrane segment spans residues 129 to 152 (VPLLNTSVLLASGVSITWAHHSLM). Residues 153–155 (EGN) are Mitochondrial matrix-facing. A helical membrane pass occupies residues 156–183 (RNHMLQALFITIALGVYFTLLQASEYYE). Over 184–190 (APFTISD) the chain is Mitochondrial intermembrane. The helical transmembrane segment at 191–223 (GVYGSTFFVATGFHGLHVIIGSTFLIVCFFRQL) threads the bilayer. Residues 224-232 (KFHFTSNHH) are Mitochondrial matrix-facing. The chain crosses the membrane as a helical span at residues 233–256 (FGFEAAAWYWHFVDVVWLFLYVSI). At 257-261 (YWWGS) the chain is on the mitochondrial intermembrane side.

The protein belongs to the cytochrome c oxidase subunit 3 family. Component of the cytochrome c oxidase (complex IV, CIV), a multisubunit enzyme composed of 14 subunits. The complex is composed of a catalytic core of 3 subunits MT-CO1, MT-CO2 and MT-CO3, encoded in the mitochondrial DNA, and 11 supernumerary subunits COX4I, COX5A, COX5B, COX6A, COX6B, COX6C, COX7A, COX7B, COX7C, COX8 and NDUFA4, which are encoded in the nuclear genome. The complex exists as a monomer or a dimer and forms supercomplexes (SCs) in the inner mitochondrial membrane with NADH-ubiquinone oxidoreductase (complex I, CI) and ubiquinol-cytochrome c oxidoreductase (cytochrome b-c1 complex, complex III, CIII), resulting in different assemblies (supercomplex SCI(1)III(2)IV(1) and megacomplex MCI(2)III(2)IV(2)).

Its subcellular location is the mitochondrion inner membrane. It carries out the reaction 4 Fe(II)-[cytochrome c] + O2 + 8 H(+)(in) = 4 Fe(III)-[cytochrome c] + 2 H2O + 4 H(+)(out). Functionally, component of the cytochrome c oxidase, the last enzyme in the mitochondrial electron transport chain which drives oxidative phosphorylation. The respiratory chain contains 3 multisubunit complexes succinate dehydrogenase (complex II, CII), ubiquinol-cytochrome c oxidoreductase (cytochrome b-c1 complex, complex III, CIII) and cytochrome c oxidase (complex IV, CIV), that cooperate to transfer electrons derived from NADH and succinate to molecular oxygen, creating an electrochemical gradient over the inner membrane that drives transmembrane transport and the ATP synthase. Cytochrome c oxidase is the component of the respiratory chain that catalyzes the reduction of oxygen to water. Electrons originating from reduced cytochrome c in the intermembrane space (IMS) are transferred via the dinuclear copper A center (CU(A)) of subunit 2 and heme A of subunit 1 to the active site in subunit 1, a binuclear center (BNC) formed by heme A3 and copper B (CU(B)). The BNC reduces molecular oxygen to 2 water molecules using 4 electrons from cytochrome c in the IMS and 4 protons from the mitochondrial matrix. The sequence is that of Cytochrome c oxidase subunit 3 (MT-CO3) from Eudorcas thomsonii (Thomson's gazelle).